We begin with the raw amino-acid sequence, 129 residues long: uncharacterized protein (129 aa).

Over residues 1 to 13 the composition is skewed to low complexity; it reads MSDVAETVVAQEP. Residues 1-129 are disordered; sequence MSDVAETVVA…SGDAPAVAAE (129 aa). Residues 34 to 94 are compositionally biased toward basic and acidic residues; that stretch reads IDEKTSEQNG…KRVSSAHEEA (61 aa). Low complexity predominate over residues 117–129; sequence VAASGDAPAVAAE.

This is an uncharacterized protein from Caenorhabditis elegans.